We begin with the raw amino-acid sequence, 419 residues long: Multifunctional CCA protein (419 aa).

Positions 8 and 11 each coordinate ATP. CTP is bound by residues Gly8 and Arg11. Mg(2+)-binding residues include Asp21 and Asp23. ATP is bound by residues Arg91, Arg149, and Arg152. Residues Arg91, Arg149, and Arg152 each contribute to the CTP site. The 102-residue stretch at 238–339 (CGVHLMMVID…VRLLERCDAF (102 aa)) folds into the HD domain.

This sequence belongs to the tRNA nucleotidyltransferase/poly(A) polymerase family. Bacterial CCA-adding enzyme type 1 subfamily. In terms of assembly, monomer. Can also form homodimers and oligomers. It depends on Mg(2+) as a cofactor. Ni(2+) is required as a cofactor.

It carries out the reaction a tRNA precursor + 2 CTP + ATP = a tRNA with a 3' CCA end + 3 diphosphate. It catalyses the reaction a tRNA with a 3' CCA end + 2 CTP + ATP = a tRNA with a 3' CCACCA end + 3 diphosphate. In terms of biological role, catalyzes the addition and repair of the essential 3'-terminal CCA sequence in tRNAs without using a nucleic acid template. Adds these three nucleotides in the order of C, C, and A to the tRNA nucleotide-73, using CTP and ATP as substrates and producing inorganic pyrophosphate. tRNA 3'-terminal CCA addition is required both for tRNA processing and repair. Also involved in tRNA surveillance by mediating tandem CCA addition to generate a CCACCA at the 3' terminus of unstable tRNAs. While stable tRNAs receive only 3'-terminal CCA, unstable tRNAs are marked with CCACCA and rapidly degraded. This is Multifunctional CCA protein from Variovorax paradoxus (strain S110).